A 406-amino-acid chain; its full sequence is Cysteine desulfurase (406 aa).

Lys226 is modified (N6-(pyridoxal phosphate)lysine). The active-site Cysteine persulfide intermediate is the Cys364.

It belongs to the class-V pyridoxal-phosphate-dependent aminotransferase family. Csd subfamily. In terms of assembly, homodimer. Interacts with SufE and the SufBCD complex composed of SufB, SufC and SufD. The interaction with SufE is required to mediate the direct transfer of the sulfur atom from the S-sulfanylcysteine. Pyridoxal 5'-phosphate is required as a cofactor.

It localises to the cytoplasm. The enzyme catalyses (sulfur carrier)-H + L-cysteine = (sulfur carrier)-SH + L-alanine. It catalyses the reaction L-selenocysteine + AH2 = hydrogenselenide + L-alanine + A + H(+). It functions in the pathway cofactor biosynthesis; iron-sulfur cluster biosynthesis. Its function is as follows. Cysteine desulfurases mobilize the sulfur from L-cysteine to yield L-alanine, an essential step in sulfur metabolism for biosynthesis of a variety of sulfur-containing biomolecules. Component of the suf operon, which is activated and required under specific conditions such as oxidative stress and iron limitation. Acts as a potent selenocysteine lyase in vitro, that mobilizes selenium from L-selenocysteine. Selenocysteine lyase activity is however unsure in vivo. The polypeptide is Cysteine desulfurase (Yersinia pestis bv. Antiqua (strain Antiqua)).